A 580-amino-acid chain; its full sequence is Lysine--tRNA ligase (580 aa).

The 'HIGH' region motif lies at 43 to 51; sequence PSGPIHLGN. Residues 178-209 form a disordered region; that stretch reads KAPAKKSQKPLDEAELEAAEGSGAAAEDDGSS. A compositionally biased stretch (low complexity) spans 196-209; sequence AEGSGAAAEDDGSS. Residues 325–329 carry the 'KMSKS' region motif; it reads KMSSS.

Belongs to the class-I aminoacyl-tRNA synthetase family.

It localises to the cytoplasm. It catalyses the reaction tRNA(Lys) + L-lysine + ATP = L-lysyl-tRNA(Lys) + AMP + diphosphate. The polypeptide is Lysine--tRNA ligase (lysS) (Streptomyces coelicolor (strain ATCC BAA-471 / A3(2) / M145)).